Reading from the N-terminus, the 686-residue chain is Glycogenin (686 aa).

Residues Leu-13, Asn-16, Tyr-19, and Arg-82 each contribute to the UDP site. Residues Leu-13, Asn-16, Tyr-19, Arg-82, Lys-91, Asp-107, Ala-108, Asp-109, Asn-139, Thr-140, Asp-166, Asp-169, and Gln-170 each contribute to the UDP-alpha-D-glucose site. The UDP site is built by Asp-107, Ala-108, and Asp-109. A Mn(2+)-binding site is contributed by Asp-107. Asp-109 is a binding site for Mn(2+). O-linked (Glc...) tyrosine glycosylation is found at Tyr-196 and Tyr-198. UDP contacts are provided by His-213, Gly-216, and Lys-219. A Mn(2+)-binding site is contributed by His-213. UDP-alpha-D-glucose contacts are provided by Gly-216 and Lys-219. Disordered stretches follow at residues 264–331, 381–444, 460–533, and 603–686; these read VKGE…ANFP, PEPT…RGNA, KHRR…GVPA, and KPLR…VLET. 2 stretches are compositionally biased toward low complexity: residues 285 to 308 and 398 to 416; these read SSQS…YTSH and SAAS…ASPT. The segment at 307–686 is not required for catalytic activity; the sequence is SHGASWDASR…TEEERDVLET (380 aa). Polar residues-rich tracts occupy residues 424-442 and 471-483; these read VTPT…TTRG and AATS…GRAQ. The span at 677–686 shows a compositional bias: acidic residues; the sequence is TEEERDVLET.

Belongs to the glycosyltransferase 8 family. Glycogenin subfamily. Interacts with glycogen synthase gsy-1; the interaction is direct. It depends on Mn(2+) as a cofactor.

Its subcellular location is the cytoplasm. It is found in the vacuole. It carries out the reaction L-tyrosyl-[glycogenin] + UDP-alpha-D-glucose = alpha-D-glucosyl-L-tyrosyl-[glycogenin] + UDP + H(+). The enzyme catalyses [1,4-alpha-D-glucosyl](n)-L-tyrosyl-[glycogenin] + UDP-alpha-D-glucose = [1,4-alpha-D-glucosyl](n+1)-L-tyrosyl-[glycogenin] + UDP + H(+). Its function is as follows. Self-glucosylating initiator of glycogen synthesis. It catalyzes the formation of a short alpha (1,4)-glucosyl chain covalently attached via a glucose 1-O-tyrosyl linkage to internal tyrosine residues and these chains act as primers for the elongation reaction catalyzed by glycogen synthase. The protein is Glycogenin of Neurospora crassa (strain ATCC 24698 / 74-OR23-1A / CBS 708.71 / DSM 1257 / FGSC 987).